Reading from the N-terminus, the 204-residue chain is MEELEKDKIERNEEMSEEVKGEGPPSELEQSEEVVEEKIETEVEQKKEPSLEEIVEELRKKLEEKEKEAKEYLDIAQRIKAEFDNYRKRTEKEKAEMISYGQEQVIIELLPVIDNFERALANEGDYNSLREGLELIYRQFKKVLDKFEVREIEAEGQMFDPYKHHALAQEEVEGKQPNEIIEVFQKGYYLKDKVIRPSLVKVAK.

Basic and acidic residues-rich tracts occupy residues 1 to 21 (MEEL…EVKG) and 36 to 46 (EEKIETEVEQK). The tract at residues 1-46 (MEELEKDKIERNEEMSEEVKGEGPPSELEQSEEVVEEKIETEVEQK) is disordered.

Belongs to the GrpE family. As to quaternary structure, homodimer.

The protein localises to the cytoplasm. In terms of biological role, participates actively in the response to hyperosmotic and heat shock by preventing the aggregation of stress-denatured proteins, in association with DnaK and GrpE. It is the nucleotide exchange factor for DnaK and may function as a thermosensor. Unfolded proteins bind initially to DnaJ; upon interaction with the DnaJ-bound protein, DnaK hydrolyzes its bound ATP, resulting in the formation of a stable complex. GrpE releases ADP from DnaK; ATP binding to DnaK triggers the release of the substrate protein, thus completing the reaction cycle. Several rounds of ATP-dependent interactions between DnaJ, DnaK and GrpE are required for fully efficient folding. This chain is Protein GrpE, found in Caldanaerobacter subterraneus subsp. tengcongensis (strain DSM 15242 / JCM 11007 / NBRC 100824 / MB4) (Thermoanaerobacter tengcongensis).